Reading from the N-terminus, the 506-residue chain is NADH-quinone oxidoreductase subunit N (506 aa).

The next 14 membrane-spanning stretches (helical) occupy residues 14 to 34, 40 to 60, 72 to 92, 109 to 129, 131 to 151, 166 to 186, 209 to 229, 256 to 276, 286 to 306, 314 to 334, 343 to 363, 385 to 405, 420 to 440, and 465 to 485; these read MVPE…DLFF, YVAL…ITLY, FVLD…AALI, GEYY…ASSV, FVTL…LVGI, VING…LYGI, LLLA…IATV, MAGF…VSVQ, MSIY…VVAL, LFAY…VALS, FYML…HGLI, AIVM…AGFI, AHYV…VYYF, and IVMS…MIGY.

The protein belongs to the complex I subunit 2 family. NDH-1 is composed of 14 different subunits. Subunits NuoA, H, J, K, L, M, N constitute the membrane sector of the complex.

It localises to the cell membrane. It catalyses the reaction a quinone + NADH + 5 H(+)(in) = a quinol + NAD(+) + 4 H(+)(out). In terms of biological role, NDH-1 shuttles electrons from NADH, via FMN and iron-sulfur (Fe-S) centers, to quinones in the respiratory chain. The immediate electron acceptor for the enzyme in this species is believed to be a menaquinone. Couples the redox reaction to proton translocation (for every two electrons transferred, four hydrogen ions are translocated across the cytoplasmic membrane), and thus conserves the redox energy in a proton gradient. The sequence is that of NADH-quinone oxidoreductase subunit N from Bacillus anthracis.